We begin with the raw amino-acid sequence, 262 residues long: Catechol O-methyltransferase domain-containing protein 1 (262 aa).

Residues 12 to 32 traverse the membrane as a helical; Signal-anchor for type II membrane protein segment; the sequence is AALALGSAALGAAFATGLLLG. S-adenosyl-L-methionine contacts are provided by residues Asp-108, 110–111, Ser-116, Glu-134, Val-135, Ala-163, Asp-185, Asp-187, and Tyr-194; that span reads GT.

It belongs to the class I-like SAM-binding methyltransferase superfamily. Cation-dependent O-methyltransferase family. As to quaternary structure, homodimer.

The protein resides in the membrane. In terms of biological role, putative O-methyltransferase. This is Catechol O-methyltransferase domain-containing protein 1 (Comtd1) from Mus musculus (Mouse).